The primary structure comprises 438 residues: Neutral metalloprotease ShpI (438 aa).

Positions 1–26 are cleaved as a signal peptide; the sequence is MINKKKLVTSLVTSSLLATFTLGSFA. The propeptide occupies 27–101; the sequence is DAHTYIINNE…KSENALSNSK (75 aa). Histidine 242 serves as a coordination point for Zn(2+). The active site involves glutamate 243. Zn(2+) is bound by residues histidine 246 and glutamate 269.

This sequence belongs to the peptidase M30 family. Zn(2+) serves as cofactor. Several different N-terminal ends may be produced, the favored N-terminus is position 102.

It localises to the secreted. With respect to regulation, inhibited by metal- and zinc-specific inhibitors, such as EDTA and 1,10-phenanthroline in vitro. Is resistant to all inhibitors of serine, cysteine and aspartic proteases. Protease that has a low substrate specificity. Catalyzes the hydrolysis of glucagon, melittin and oxidized beta-insulin at various positions in vitro. Is not able to cleave elastin or the synthetic substrates FAGLA (a substrate for neutral proteinases) and FALGPA (a substrate for collagenase). This is Neutral metalloprotease ShpI from Staphylococcus hyicus.